The primary structure comprises 59 residues: Large ribosomal subunit protein bL35 (59 aa).

A compositionally biased stretch (basic residues) spans 17–43 (GQIKRKHAYTSHLAPHKSTKQKRHLRK). The interval 17–47 (GQIKRKHAYTSHLAPHKSTKQKRHLRKQATV) is disordered.

The protein belongs to the bacterial ribosomal protein bL35 family.

In Mycoplasma genitalium (strain ATCC 33530 / DSM 19775 / NCTC 10195 / G37) (Mycoplasmoides genitalium), this protein is Large ribosomal subunit protein bL35.